We begin with the raw amino-acid sequence, 245 residues long: tRNA1(Val) (adenine(37)-N6)-methyltransferase (245 aa).

Belongs to the methyltransferase superfamily. tRNA (adenine-N(6)-)-methyltransferase family.

It localises to the cytoplasm. The catalysed reaction is adenosine(37) in tRNA1(Val) + S-adenosyl-L-methionine = N(6)-methyladenosine(37) in tRNA1(Val) + S-adenosyl-L-homocysteine + H(+). Its function is as follows. Specifically methylates the adenine in position 37 of tRNA(1)(Val) (anticodon cmo5UAC). In Cronobacter sakazakii (strain ATCC BAA-894) (Enterobacter sakazakii), this protein is tRNA1(Val) (adenine(37)-N6)-methyltransferase.